The chain runs to 174 residues: NADH-ubiquinone oxidoreductase chain 6 (174 aa).

The next 4 helical transmembrane spans lie at 24–44, 53–73, 82–102, and 143–163; these read LALGLTLLIQTIFVCLLSGLM, ILFLIFLGGMLVLFIYVTSLA, IKLTLFSMFILFFMFILSMIL, and FVTILLMNYLLITLIVVVKIT.

The protein belongs to the complex I subunit 6 family.

The protein resides in the mitochondrion membrane. It catalyses the reaction a ubiquinone + NADH + 5 H(+)(in) = a ubiquinol + NAD(+) + 4 H(+)(out). Its function is as follows. Core subunit of the mitochondrial membrane respiratory chain NADH dehydrogenase (Complex I) that is believed to belong to the minimal assembly required for catalysis. Complex I functions in the transfer of electrons from NADH to the respiratory chain. The immediate electron acceptor for the enzyme is believed to be ubiquinone. This chain is NADH-ubiquinone oxidoreductase chain 6 (mt:ND6), found in Drosophila yakuba (Fruit fly).